We begin with the raw amino-acid sequence, 104 residues long: Circadian clock oscillator protein KaiB (104 aa).

Belongs to the KaiB family. As to quaternary structure, the KaiABC complex composition changes during the circadian cycle to control KaiC phosphorylation. Complexes KaiC(6), KaiA(2-4):KaiC(6), KaiB(6):KaiC(6) and KaiC(6):KaiB(6):KaiA(12) are among the most important forms, many form cooperatively. Undergoes a major conformational rearrangment; in the free state forms homotetramers as a dimer of dimers. When bound to the CI domain of KaiC switches to a monomeric thioredoxin-fold (KaiB(fs)). KaiB(fs) binds CikA, leading it to dephosphorylate phospho-RpaA.

In terms of biological role, key component of the KaiABC oscillator complex, which constitutes the main circadian regulator in cyanobacteria. Complex composition changes during the circadian cycle to control KaiC phosphorylation. KaiA stimulates KaiC autophosphorylation, while KaiB sequesters KaiA, leading to KaiC autodephosphorylation. Phospho-Ser-431 KaiC accumulation triggers binding of KaiB to form the KaiB(6):KaiC(6) complex, leading to changes in output regulators CikA and SasA. KaiB switches to a thioredoxin-like fold (KaiB(fs)) when bound to KaiC. KaiB(6):KaiC(6) formation exposes a site for KaiA binding that sequesters KaiA from KaiC, making the KaiC(6):KaiB(6):KaiA(12) complex that results in KaiC autodephosphorylation. Its function is as follows. A metamorphic protein which reversibly switches between an inactive tetrameric fold and a rare, thioredoxin-like monomeric fold (KaiB(fs)). KaiB(fs) binds phospho-KaiC, KaiA and CikA. KaiA and CikA compete for binding to KaiB(fs), and KaiB(fs) and SasA compete for binding to KaiC, thus the clock oscillator and output signal pathway are tightly coupled. This Parasynechococcus marenigrum (strain WH8102) protein is Circadian clock oscillator protein KaiB.